A 224-amino-acid chain; its full sequence is Zinc finger C4H2 domain-containing protein (224 aa).

A coiled-coil region spans residues 12-97 (ENIKEIRNKT…NKLLESTRRL (86 aa)). Disordered regions lie at residues 166–185 (QAARKQDARQTATFRQQPPP) and 204–224 (PLCKAKSRSRNPKKPKRKPDE). The C4H2-type zinc finger occupies 189-206 (CLSCHQQIHRNAPICPLC). A compositionally biased stretch (basic residues) spans 208 to 224 (AKSRSRNPKKPKRKPDE).

The protein resides in the nucleus. It is found in the cytoplasm. The protein localises to the postsynaptic cell membrane. Functionally, plays a role in GABAergic and V2 interneurons differentiation. Involved in motoneuron development and in neuromuscular junction formation. This Danio rerio (Zebrafish) protein is Zinc finger C4H2 domain-containing protein (zc4h2).